Consider the following 121-residue polypeptide: Ribonuclease P protein component (121 aa).

The protein belongs to the RnpA family. Consists of a catalytic RNA component (M1 or rnpB) and a protein subunit.

The catalysed reaction is Endonucleolytic cleavage of RNA, removing 5'-extranucleotides from tRNA precursor.. Its function is as follows. RNaseP catalyzes the removal of the 5'-leader sequence from pre-tRNA to produce the mature 5'-terminus. It can also cleave other RNA substrates such as 4.5S RNA. The protein component plays an auxiliary but essential role in vivo by binding to the 5'-leader sequence and broadening the substrate specificity of the ribozyme. This chain is Ribonuclease P protein component, found in Neisseria gonorrhoeae (strain ATCC 700825 / FA 1090).